Here is a 457-residue protein sequence, read N- to C-terminus: Bifunctional protein GlmU (457 aa).

The pyrophosphorylase stretch occupies residues 1 to 229 (MSNSAKSVVI…LSEMEGVNNR (229 aa)). Residues 11–14 (LAAG), lysine 25, glutamine 76, 81–82 (GT), 103–105 (YGD), glycine 140, glutamate 154, asparagine 169, and asparagine 227 contribute to the UDP-N-acetyl-alpha-D-glucosamine site. Aspartate 105 lines the Mg(2+) pocket. Residue asparagine 227 participates in Mg(2+) binding. The segment at 230-250 (LQLSALERIYQSEQAEQLLLA) is linker. The N-acetyltransferase stretch occupies residues 251–457 (GVMLLDPARF…GWKRPVKEKK (207 aa)). Arginine 333 and lysine 351 together coordinate UDP-N-acetyl-alpha-D-glucosamine. The active-site Proton acceptor is the histidine 363. Positions 366 and 377 each coordinate UDP-N-acetyl-alpha-D-glucosamine. Acetyl-CoA-binding positions include alanine 380, 386–387 (NY), serine 405, alanine 423, and arginine 440.

The protein in the N-terminal section; belongs to the N-acetylglucosamine-1-phosphate uridyltransferase family. In the C-terminal section; belongs to the transferase hexapeptide repeat family. Homotrimer. It depends on Mg(2+) as a cofactor.

The protein localises to the cytoplasm. The enzyme catalyses alpha-D-glucosamine 1-phosphate + acetyl-CoA = N-acetyl-alpha-D-glucosamine 1-phosphate + CoA + H(+). The catalysed reaction is N-acetyl-alpha-D-glucosamine 1-phosphate + UTP + H(+) = UDP-N-acetyl-alpha-D-glucosamine + diphosphate. It functions in the pathway nucleotide-sugar biosynthesis; UDP-N-acetyl-alpha-D-glucosamine biosynthesis; N-acetyl-alpha-D-glucosamine 1-phosphate from alpha-D-glucosamine 6-phosphate (route II): step 2/2. Its pathway is nucleotide-sugar biosynthesis; UDP-N-acetyl-alpha-D-glucosamine biosynthesis; UDP-N-acetyl-alpha-D-glucosamine from N-acetyl-alpha-D-glucosamine 1-phosphate: step 1/1. It participates in bacterial outer membrane biogenesis; LPS lipid A biosynthesis. Catalyzes the last two sequential reactions in the de novo biosynthetic pathway for UDP-N-acetylglucosamine (UDP-GlcNAc). The C-terminal domain catalyzes the transfer of acetyl group from acetyl coenzyme A to glucosamine-1-phosphate (GlcN-1-P) to produce N-acetylglucosamine-1-phosphate (GlcNAc-1-P), which is converted into UDP-GlcNAc by the transfer of uridine 5-monophosphate (from uridine 5-triphosphate), a reaction catalyzed by the N-terminal domain. This is Bifunctional protein GlmU from Photorhabdus laumondii subsp. laumondii (strain DSM 15139 / CIP 105565 / TT01) (Photorhabdus luminescens subsp. laumondii).